The sequence spans 874 residues: Alanine--tRNA ligase (874 aa).

Zn(2+) is bound by residues His-562, His-566, Cys-664, and His-668.

It belongs to the class-II aminoacyl-tRNA synthetase family. Zn(2+) is required as a cofactor.

Its subcellular location is the cytoplasm. The catalysed reaction is tRNA(Ala) + L-alanine + ATP = L-alanyl-tRNA(Ala) + AMP + diphosphate. Its function is as follows. Catalyzes the attachment of alanine to tRNA(Ala) in a two-step reaction: alanine is first activated by ATP to form Ala-AMP and then transferred to the acceptor end of tRNA(Ala). Also edits incorrectly charged Ser-tRNA(Ala) and Gly-tRNA(Ala) via its editing domain. This Neisseria meningitidis serogroup C (strain 053442) protein is Alanine--tRNA ligase.